Here is a 712-residue protein sequence, read N- to C-terminus: MWVCLQLPVFLASVTLFEVAASDTIAQAASTTTISDAVSKVKIQVNKAFLDSRTRLKTTLSSEAPTTQQLSEYFKHAKGRTRTAIRNGQVWEESLKRLRRDTTLTNVTDPSLDLTALSWEVGCGAPVPLVKCDENSPYRTITGDCNNRRSPALGAANRALARWLPAEYEDGLALPFGWTQRKTRNGFRVPLAREVSNKIVGYLDEEGVLDQNRSLLFMQWGQIVDHDLDFAPETELGSNEHSKTQCEEYCIQGDNCFPIMFPKNDPKLKTQGKCMPFFRAGFVCPTPPYQSLAREQINAVTSFLDASLVYGSEPSLASRLRNLSSPLGLMAVNQEAWDHGLAYLPFNNKKPSPCEFINTTARVPCFLAGDFRASEQILLATAHTLLLREHNRLARELKKLNPHWNGEKLYQEARKILGAFIQIITFRDYLPIVLGSEMQKWIPPYQGYNNSVDPRISNVFTFAFRFGHMEVPSTVSRLDENYQPWGPEAELPLHTLFFNTWRIIKDGGIDPLVRGLLAKKSKLMNQDKMVTSELRNKLFQPTHKIHGFDLAAINLQRCRDHGMPGYNSWRGFCGLSQPKTLKGLQTVLKNKILAKKLMDLYKTPDNIDIWIGGNAEPMVERGRVGPLLACLLGRQFQQIRDGDRFWWENPGVFTEKQRDSLQKVSFSRLICDNTHITKVPLHAFQANNYPHDFVDCSTVDKLDLSPWASREN.

The N-terminal stretch at 1–22 is a signal peptide; sequence MWVCLQLPVFLASVTLFEVAAS. The propeptide occupies 23–100; that stretch reads DTIAQAASTT…WEESLKRLRR (78 aa). Asn-106 carries N-linked (GlcNAc...) asparagine glycosylation. Intrachain disulfides connect Cys-123-Cys-284, Cys-132-Cys-145, Cys-246-Cys-256, and Cys-250-Cys-274. A glycan (N-linked (GlcNAc...) asparagine) is linked at Asn-212. Position 225 (Asp-225) interacts with heme b. Catalysis depends on His-226, which acts as the Proton acceptor. Asp-227 contributes to the Ca(2+) binding site. Residues Thr-301, Phe-303, Asp-305, and Ser-307 each contribute to the Ca(2+) site. Ser-315 is modified (phosphoserine). Asn-322 and Asn-358 each carry an N-linked (GlcNAc...) asparagine glycan. A disulfide bond links Cys-354 and Cys-365. Glu-375 contributes to the heme b binding site. N-linked (GlcNAc...) asparagine glycosylation occurs at Asn-449. His-468 contacts heme b. At Tyr-482 the chain carries 3'-nitrotyrosine. 2 cysteine pairs are disulfide-bonded: Cys-573–Cys-630 and Cys-671–Cys-696.

This sequence belongs to the peroxidase family. XPO subfamily. The cofactor is Ca(2+). Requires heme b as cofactor. As to expression, mammary gland; milk.

It localises to the secreted. The protein resides in the cytoplasm. The enzyme catalyses 2 a phenolic donor + H2O2 = 2 a phenolic radical donor + 2 H2O. It carries out the reaction thiocyanate + H2O2 + H(+) = hypothiocyanous acid + H2O. It catalyses the reaction iodide + H2O2 = hypoiodite + H2O. Heme-containing oxidoreductase which catalyzes the conversion of thiocyanate (SCN(-)) into antimicrobial agent hypothiocyanous acid (OSCN(-)) in the presence of hydrogen peroxide (H2O2). Also involved in the conversion of iodide (I(-)) into hypoiodite (IO(-)) in the presence of H2O2. Responsible for the inactivation of a wide range of micro-organisms and hence, important component of defense mechanism. The lactoperoxidase-SCN(-)-H2O2 system shows antibacterial properties against some streptococci strains. The lactoperoxidase-I(-)-H2O2 system shows antibacterial properties against E.coli. May protect the udder from infection and may promote growth in newborns. May be implicated in airway host defense against infection. May contribute to maintaining an appropriate H2O2 cellular level, therefore protecting cells from H2O2-caused injuries and inflammation. This is Lactoperoxidase (LPO) from Bos taurus (Bovine).